Consider the following 192-residue polypeptide: Immunity protein YqcF (192 aa).

Probably interacts with cognate toxin YqcG but not with other non-cognate toxins. The interaction inhibits the toxic activity of YqcG.

It localises to the cytoplasm. Its function is as follows. Immunity component of one of 6 LXG toxin-immunity modules in this strain. They promote kin selection, mediate competition in biofilms, and drive spatial segregation of different strains, indicating that LXG toxins may help avoid warfare between strains in biofilms. Mediates intercellular competition during biofilm formation; disruption of the operon disadvantages the bacteria, but overexpression of the cognate immunity protein restores growth in competition with wild-type. In situ neutralizes the toxic effect of cognate toxin YqcG. Neutralizes the toxic activity of cognate toxin YqcG upon expression in E.coli. Does not have immunity protein activity on other LXG toxins. In Bacillus subtilis (strain 168), this protein is Immunity protein YqcF (yqcF).